Here is a 67-residue protein sequence, read N- to C-terminus: Large ribosomal subunit protein bL31 (67 aa).

This sequence belongs to the bacterial ribosomal protein bL31 family. Type A subfamily. Part of the 50S ribosomal subunit.

Binds the 23S rRNA. This chain is Large ribosomal subunit protein bL31, found in Wolinella succinogenes (strain ATCC 29543 / DSM 1740 / CCUG 13145 / JCM 31913 / LMG 7466 / NCTC 11488 / FDC 602W) (Vibrio succinogenes).